A 331-amino-acid chain; its full sequence is Ferrochelatase (331 aa).

His-187 and Glu-286 together coordinate Fe cation.

It belongs to the ferrochelatase family.

It is found in the cytoplasm. It catalyses the reaction heme b + 2 H(+) = protoporphyrin IX + Fe(2+). The protein operates within porphyrin-containing compound metabolism; protoheme biosynthesis; protoheme from protoporphyrin-IX: step 1/1. Catalyzes the ferrous insertion into protoporphyrin IX. The protein is Ferrochelatase of Legionella pneumophila (strain Paris).